Here is a 414-residue protein sequence, read N- to C-terminus: Serine--tRNA ligase (414 aa).

Thr-230–Glu-232 provides a ligand contact to L-serine. Residue Arg-261–Glu-263 participates in ATP binding. Glu-284 is an L-serine binding site. Glu-348–Ser-351 contacts ATP. Ser-382 is a binding site for L-serine.

The protein belongs to the class-II aminoacyl-tRNA synthetase family. Type-1 seryl-tRNA synthetase subfamily. Homodimer. The tRNA molecule binds across the dimer.

The protein resides in the cytoplasm. It catalyses the reaction tRNA(Ser) + L-serine + ATP = L-seryl-tRNA(Ser) + AMP + diphosphate + H(+). The enzyme catalyses tRNA(Sec) + L-serine + ATP = L-seryl-tRNA(Sec) + AMP + diphosphate + H(+). The protein operates within aminoacyl-tRNA biosynthesis; selenocysteinyl-tRNA(Sec) biosynthesis; L-seryl-tRNA(Sec) from L-serine and tRNA(Sec): step 1/1. Catalyzes the attachment of serine to tRNA(Ser). Is also able to aminoacylate tRNA(Sec) with serine, to form the misacylated tRNA L-seryl-tRNA(Sec), which will be further converted into selenocysteinyl-tRNA(Sec). The protein is Serine--tRNA ligase of Campylobacter concisus (strain 13826).